The primary structure comprises 459 residues: Phosphomethylpyrimidine synthase (459 aa).

Residues Asn-80, Met-109, Tyr-139, His-175, 195 to 197 (SRG), 236 to 239 (DSLR), and Glu-275 each bind substrate. His-279 provides a ligand contact to Zn(2+). Tyr-302 is a substrate binding site. Zn(2+) is bound at residue His-343. Cys-423, Cys-426, and Cys-431 together coordinate [4Fe-4S] cluster.

The protein belongs to the ThiC family. It depends on [4Fe-4S] cluster as a cofactor.

It catalyses the reaction 5-amino-1-(5-phospho-beta-D-ribosyl)imidazole + S-adenosyl-L-methionine = 4-amino-2-methyl-5-(phosphooxymethyl)pyrimidine + CO + 5'-deoxyadenosine + formate + L-methionine + 3 H(+). The protein operates within cofactor biosynthesis; thiamine diphosphate biosynthesis. Catalyzes the synthesis of the hydroxymethylpyrimidine phosphate (HMP-P) moiety of thiamine from aminoimidazole ribotide (AIR) in a radical S-adenosyl-L-methionine (SAM)-dependent reaction. This is Phosphomethylpyrimidine synthase from Gloeothece citriformis (strain PCC 7424) (Cyanothece sp. (strain PCC 7424)).